The following is a 159-amino-acid chain: Peptide methionine sulfoxide reductase MsrB (159 aa).

In terms of domain architecture, MsrB spans 14–137; that stretch reads TEKLKENLTE…NSASLKFIAK (124 aa). The Nucleophile role is filled by cysteine 126.

It belongs to the MsrB Met sulfoxide reductase family.

The catalysed reaction is L-methionyl-[protein] + [thioredoxin]-disulfide + H2O = L-methionyl-(R)-S-oxide-[protein] + [thioredoxin]-dithiol. The sequence is that of Peptide methionine sulfoxide reductase MsrB from Hathewaya histolytica (Clostridium histolyticum).